Here is a 721-residue protein sequence, read N- to C-terminus: 1,4-alpha-glucan branching enzyme GlgB (721 aa).

D400 serves as the catalytic Nucleophile. The active-site Proton donor is E453.

This sequence belongs to the glycosyl hydrolase 13 family. GlgB subfamily. As to quaternary structure, monomer.

It carries out the reaction Transfers a segment of a (1-&gt;4)-alpha-D-glucan chain to a primary hydroxy group in a similar glucan chain.. It functions in the pathway glycan biosynthesis; glycogen biosynthesis. Functionally, catalyzes the formation of the alpha-1,6-glucosidic linkages in glycogen by scission of a 1,4-alpha-linked oligosaccharide from growing alpha-1,4-glucan chains and the subsequent attachment of the oligosaccharide to the alpha-1,6 position. The protein is 1,4-alpha-glucan branching enzyme GlgB of Chlamydia abortus (strain DSM 27085 / S26/3) (Chlamydophila abortus).